Here is a 327-residue protein sequence, read N- to C-terminus: Probable cell division protein WhiA (327 aa).

The H-T-H motif DNA-binding region spans 275–308; it reads SLEELGRLADPPMTKDAVAGRIRRLLSMADRKAK.

It belongs to the WhiA family.

Its function is as follows. Involved in cell division and chromosome segregation. This Mycobacterium avium (strain 104) protein is Probable cell division protein WhiA.